A 435-amino-acid chain; its full sequence is Fez family zinc finger protein 2 (435 aa).

The short motif at 27–42 is the Engrailed homology 1 repressor element; it reads SLAFSIERIMAKTSEP. C2H2-type zinc fingers lie at residues 254–276, 282–304, 310–332, 338–360, 366–388, and 394–417; these read FTCE…MPVH, FVCK…KIIH, HKCN…IRIH, FVCE…KLTH, YKCT…MHTH, and FTCG…RKLH.

The protein belongs to the krueppel C2H2-type zinc-finger protein family.

Its subcellular location is the nucleus. Transcription repressor. Component of the regulatory cascade that controls the development of dopaminergic (DA) and serotonergic (5HT) neurons. This chain is Fez family zinc finger protein 2 (fezf2), found in Xenopus tropicalis (Western clawed frog).